A 301-amino-acid chain; its full sequence is E3 ubiquitin-protein ligase DIS1 (301 aa).

The RING-type; degenerate zinc finger occupies 53–89 (CPVCLSAMYPPIHQCSNGHTLCSGCKPRVHNRCPTCR). The SIAH-type; degenerate zinc-finger motif lies at 106–166 (SLELPCKYQN…LVNHLKDDHK (61 aa)).

The protein belongs to the SINA (Seven in absentia) family. As to quaternary structure, homodimer. Interacts with NEK6. Interacts with SKIPA.

The protein localises to the nucleus. The protein resides in the cytoplasm. It carries out the reaction S-ubiquitinyl-[E2 ubiquitin-conjugating enzyme]-L-cysteine + [acceptor protein]-L-lysine = [E2 ubiquitin-conjugating enzyme]-L-cysteine + N(6)-ubiquitinyl-[acceptor protein]-L-lysine.. Its pathway is protein modification; protein ubiquitination. In terms of biological role, E3 ubiquitin-protein ligase that mediates ubiquitination and subsequent proteasomal degradation of target proteins. E3 ubiquitin ligases accept ubiquitin from an E2 ubiquitin-conjugating enzyme in the form of a thioester and then directly transfers the ubiquitin to targeted substrates. Plays a negative role in drought stress tolerance through transcriptional and post-translational regulation of diverse stress-related genes. Interacts with the serine/threonine-protein kinase NEK6 and promotes its degradation via the 26S proteasome-dependent pathway. This is E3 ubiquitin-protein ligase DIS1 from Oryza sativa subsp. japonica (Rice).